A 425-amino-acid polypeptide reads, in one-letter code: Interferon-activable protein 211 (425 aa).

Residues 1–88 form the Pyrin domain; it reads MVNEYKRIVL…AEILKKERSE (88 aa). The segment covering 86-99 has biased composition (basic and acidic residues); it reads RSEVTGETSLEKNG. Positions 86-223 are disordered; it reads RSEVTGETSL…QNQNIPRGAV (138 aa). Low complexity predominate over residues 122-153; sequence TSATQEETSTAQAGTSTAQAGTSTAQAGTSTA. 4 consecutive repeat copies span residues 129-135, 136-142, 143-149, and 150-156. The 4 X 7 AA tandem repeats of T-S-T-A-Q-A-[GR] stretch occupies residues 129-177; that stretch reads TSTAQAGTSTAQAGTSTAQAGTSTAQKRKSMREEETGVKKSKAAKEPDQ. Over residues 159–176 the composition is skewed to basic and acidic residues; it reads MREEETGVKKSKAAKEPD. Low complexity predominate over residues 190-206; it reads SPILHSSSSASSNILSA. Positions 207–218 are enriched in polar residues; that stretch reads KNQKSQPQNQNI. The region spanning 213–413 is the HIN-200 domain; sequence PQNQNIPRGA…CGDHSFVKVT (201 aa).

This sequence belongs to the HIN-200 family. As to quaternary structure, interacts with HOXB2. Mononuclear phagocytes.

It localises to the nucleus. In terms of biological role, inhibits cell growth via p53/TP53 and RB1-dependent and independent pathways. May work in synergy with TP53 to promote the transcription of CDKN1A/P21. This is Interferon-activable protein 211 from Mus musculus (Mouse).